A 117-amino-acid polypeptide reads, in one-letter code: Large ribosomal subunit protein uL18 (117 aa).

It belongs to the universal ribosomal protein uL18 family. As to quaternary structure, part of the 50S ribosomal subunit; part of the 5S rRNA/L5/L18/L25 subcomplex. Contacts the 5S and 23S rRNAs.

Functionally, this is one of the proteins that bind and probably mediate the attachment of the 5S RNA into the large ribosomal subunit, where it forms part of the central protuberance. This is Large ribosomal subunit protein uL18 from Hydrogenovibrio crunogenus (strain DSM 25203 / XCL-2) (Thiomicrospira crunogena).